Reading from the N-terminus, the 252-residue chain is Ribosomal RNA small subunit methyltransferase J (252 aa).

Residues 101 to 102, 117 to 118, 153 to 154, and D171 contribute to the S-adenosyl-L-methionine site; these read RD, ER, and SS.

Belongs to the methyltransferase superfamily. RsmJ family.

The protein localises to the cytoplasm. It carries out the reaction guanosine(1516) in 16S rRNA + S-adenosyl-L-methionine = N(2)-methylguanosine(1516) in 16S rRNA + S-adenosyl-L-homocysteine + H(+). In terms of biological role, specifically methylates the guanosine in position 1516 of 16S rRNA. The protein is Ribosomal RNA small subunit methyltransferase J of Salmonella schwarzengrund (strain CVM19633).